The following is a 580-amino-acid chain: MGVMKRYMQFVKPYKKQIFVTVLIGIVKFSIPLALPLLLKYVVDDIIQGGGTASDKTTSLFTIMAIMFALFLILRPPVEYYRQYFAQWTASKVLYDIRAKLFDHIQKLSLRFYANTRTGEVISRVINDVEQTKDFVITGLMNIWLDMLTILIVISIMLTLDVKLTLISIVLFPLYGISVKYFYGRLRKLTRERSQALAQVQGHLHERIQGMPVIRSFAIEDHEQAQFNEKNGHFLDKAIRHTNWNAKTFAVVNTITDLAPLIVIACAGYFVINGPLTVGTMVAFVGYIDRMYNPVRRLINSSTTLTQSIASMDRVFEFIDEPYELTDKPNAIKADQIRGGVEFQNVSFQYEKDKENILHDVSLKVNRGETVALVGMSGGGKSTLVSLIPRFYDVTSGRLLIDGTDIRDYEARSLRNQVGMVLQDTFLFSETIRENIAIGKPDATLEEIIEAAKAANAHEFIMSFPEGYETRVGERGVKLSGGQKQRISIARVFLKNPPLLILDEATSALDLESEHYIQEAMDKLAKDRTTFVVAHRLSTITHADKIVVMENGTIIEIGTHDELMDYESQYKHLFTIQNLN.

The Cytoplasmic segment spans residues 1 to 17 (MGVMKRYMQFVKPYKKQ). The chain crosses the membrane as a helical span at residues 18–38 (IFVTVLIGIVKFSIPLALPLL). In terms of domain architecture, ABC transmembrane type-1 spans 19–307 (FVTVLIGIVK…LINSSTTLTQ (289 aa)). Residues 39–57 (LKYVVDDIIQGGGTASDKT) lie on the Extracellular side of the membrane. A helical transmembrane segment spans residues 58–78 (TSLFTIMAIMFALFLILRPPV). Over 79–135 (EYYRQYFAQWTASKVLYDIRAKLFDHIQKLSLRFYANTRTGEVISRVINDVEQTKDF) the chain is Cytoplasmic. Residues 136–156 (VITGLMNIWLDMLTILIVISI) traverse the membrane as a helical segment. At 157 to 163 (MLTLDVK) the chain is on the extracellular side. A helical membrane pass occupies residues 164-184 (LTLISIVLFPLYGISVKYFYG). The Cytoplasmic portion of the chain corresponds to 185–243 (RLRKLTRERSQALAQVQGHLHERIQGMPVIRSFAIEDHEQAQFNEKNGHFLDKAIRHTN). A helical transmembrane segment spans residues 244 to 263 (WNAKTFAVVNTITDLAPLIV). The Extracellular portion of the chain corresponds to 264 to 268 (IACAG). Residues 269 to 288 (YFVINGPLTVGTMVAFVGYI) traverse the membrane as a helical segment. The Cytoplasmic segment spans residues 289–580 (DRMYNPVRRL…KHLFTIQNLN (292 aa)). One can recognise an ABC transporter domain in the interval 341 to 576 (VEFQNVSFQY…ESQYKHLFTI (236 aa)). 375-382 (GMSGGGKS) is an ATP binding site.

It belongs to the ABC transporter superfamily. Homodimer.

Its subcellular location is the cell membrane. Its function is as follows. May be involved in multidrug export. Transmembrane domains (TMD) form a pore in the cell membrane and the ATP-binding domain (NBD) is responsible for energy generation. The chain is Putative multidrug export ATP-binding/permease protein YgaD (ygaD) from Bacillus subtilis (strain 168).